The primary structure comprises 165 residues: NADPH-dependent 7-cyano-7-deazaguanine reductase (165 aa).

Cys56 (thioimide intermediate) is an active-site residue. Asp63 (proton donor) is an active-site residue. Residues 78–80 (VES) and 97–98 (HE) each bind substrate.

The protein belongs to the GTP cyclohydrolase I family. QueF type 1 subfamily.

It localises to the cytoplasm. It carries out the reaction 7-aminomethyl-7-carbaguanine + 2 NADP(+) = 7-cyano-7-deazaguanine + 2 NADPH + 3 H(+). The protein operates within tRNA modification; tRNA-queuosine biosynthesis. Catalyzes the NADPH-dependent reduction of 7-cyano-7-deazaguanine (preQ0) to 7-aminomethyl-7-deazaguanine (preQ1). The chain is NADPH-dependent 7-cyano-7-deazaguanine reductase from Bacillus cereus (strain ATCC 14579 / DSM 31 / CCUG 7414 / JCM 2152 / NBRC 15305 / NCIMB 9373 / NCTC 2599 / NRRL B-3711).